The sequence spans 322 residues: Tyrosine recombinase XerC (322 aa).

The Core-binding (CB) domain occupies 14-104; the sequence is PDLREAAAAW…ALRSFARHLD (91 aa). The Tyr recombinase domain occupies 125–311; it reads RLPRPLPVAA…DSARLLSAFD (187 aa). Residues Arg-170, Lys-195, His-263, Arg-266, and His-289 contribute to the active site. Catalysis depends on Tyr-298, which acts as the O-(3'-phospho-DNA)-tyrosine intermediate.

This sequence belongs to the 'phage' integrase family. XerC subfamily. As to quaternary structure, forms a cyclic heterotetrameric complex composed of two molecules of XerC and two molecules of XerD.

The protein localises to the cytoplasm. Its function is as follows. Site-specific tyrosine recombinase, which acts by catalyzing the cutting and rejoining of the recombining DNA molecules. The XerC-XerD complex is essential to convert dimers of the bacterial chromosome into monomers to permit their segregation at cell division. It also contributes to the segregational stability of plasmids. This chain is Tyrosine recombinase XerC, found in Methylobacterium nodulans (strain LMG 21967 / CNCM I-2342 / ORS 2060).